Here is a 518-residue protein sequence, read N- to C-terminus: Serine/threonine-protein kinase PRR1 (518 aa).

Met1 bears the N-acetylmethionine mark. Positions 1-12 (MDEYSSIYSQPK) are enriched in polar residues. Residues 1–59 (MDEYSSIYSQPKTPRLKQEGFPDSIGDQHEKALIDENGEEDKKMASTEGTTGDSRSTPL) form a disordered region. Positions 16 to 45 (LKQEGFPDSIGDQHEKALIDENGEEDKKMA) are enriched in basic and acidic residues. Positions 47-59 (TEGTTGDSRSTPL) are enriched in polar residues. Ser132 bears the Phosphoserine mark. Residues 192–508 (WKKVRPIGSG…INEIYESPFV (317 aa)) enclose the Protein kinase domain. Residues 198–206 (IGSGNFSTV) and Lys225 each bind ATP. Asp354 (proton acceptor) is an active-site residue.

The protein belongs to the protein kinase superfamily. CAMK Ser/Thr protein kinase family. NIM1 subfamily.

Its subcellular location is the cytoplasm. The catalysed reaction is L-seryl-[protein] + ATP = O-phospho-L-seryl-[protein] + ADP + H(+). The enzyme catalyses L-threonyl-[protein] + ATP = O-phospho-L-threonyl-[protein] + ADP + H(+). Functionally, protein kinase that functions as a regulator in the pheromone-induced mating pathway downstream of mitogen-activated protein kinase (MAPK) FUS3. Diminishes transcriptional induction of genes in response to pheromone signaling. The chain is Serine/threonine-protein kinase PRR1 (PRR1) from Saccharomyces cerevisiae (strain ATCC 204508 / S288c) (Baker's yeast).